The chain runs to 163 residues: Nucleotide-binding protein Npun_R4736 (163 aa).

This sequence belongs to the YajQ family.

Functionally, nucleotide-binding protein. In Nostoc punctiforme (strain ATCC 29133 / PCC 73102), this protein is Nucleotide-binding protein Npun_R4736.